A 140-amino-acid chain; its full sequence is Small ribosomal subunit protein uS9A (140 aa).

The protein belongs to the universal ribosomal protein uS9 family. Component of the small ribosomal subunit (SSU). Mature yeast ribosomes consist of a small (40S) and a large (60S) subunit. The 40S small subunit contains 1 molecule of ribosomal RNA (18S rRNA) and at least 33 different proteins. The large 60S subunit contains 3 rRNA molecules (25S, 5.8S and 5S rRNA) and at least 46 different proteins.

The protein localises to the cytoplasm. Its function is as follows. Component of the ribosome, a large ribonucleoprotein complex responsible for the synthesis of proteins in the cell. The small ribosomal subunit (SSU) binds messenger RNAs (mRNAs) and translates the encoded message by selecting cognate aminoacyl-transfer RNA (tRNA) molecules. The large subunit (LSU) contains the ribosomal catalytic site termed the peptidyl transferase center (PTC), which catalyzes the formation of peptide bonds, thereby polymerizing the amino acids delivered by tRNAs into a polypeptide chain. The nascent polypeptides leave the ribosome through a tunnel in the LSU and interact with protein factors that function in enzymatic processing, targeting, and the membrane insertion of nascent chains at the exit of the ribosomal tunnel. This Schizosaccharomyces pombe (strain 972 / ATCC 24843) (Fission yeast) protein is Small ribosomal subunit protein uS9A (rps1601).